The following is a 409-amino-acid chain: MDPTLKELLHANLEWIFVGGKGGVGKTTTSCALATLFATTPISDAASPGGTRPRRVLLISTDPAHNLSDAFNQRFGPHPTPVKGLEESLAAMEVDPKNFTHGALMSSLTGAKSDGSASSLSAEAEADAAQHTASFARIGAVLKEAARTMPGIDEISVFAEILHYVRTLFYDLLIFDTAPTGHTLRLLALPQTLSSTFDKLMSLEGLAPMIEAASHLIGTNLGALGGACGDTAGSCEQATAAPSLSSAAPGEGSAAAASSQSRWCITADEVRSTALHWRQTMEEVQARFNDPNRTSFVCVCIAEFLSVYETERLVQELMKYNIGCDSIVVNQLVLKPSSEPPCRMCSARQKIQAKYLEQIDLLYEDFHVVKMPLLSDEVRGVPALKKFARFLQEPYSPDTHGYIDVQEPC.

21 to 28 (KGGVGKTT) contributes to the ATP binding site. The active site involves D62. Positions 303 and 330 each coordinate ATP. Positions 342 and 345 each coordinate Zn(2+).

Belongs to the arsA ATPase family. As to quaternary structure, homodimer.

Its subcellular location is the cytoplasm. It localises to the endoplasmic reticulum. Functionally, ATPase required for the post-translational delivery of tail-anchored (TA) proteins to the endoplasmic reticulum. Recognizes and selectively binds the transmembrane domain of TA proteins in the cytosol. This complex then targets to the endoplasmic reticulum by membrane-bound receptors, where the tail-anchored protein is released for insertion. This process is regulated by ATP binding and hydrolysis. ATP binding drives the homodimer towards the closed dimer state, facilitating recognition of newly synthesized TA membrane proteins. ATP hydrolysis is required for insertion. Subsequently, the homodimer reverts towards the open dimer state, lowering its affinity for the membrane-bound receptor, and returning it to the cytosol to initiate a new round of targeting. The sequence is that of ATPase ASNA1 homolog from Leishmania major.